A 301-amino-acid polypeptide reads, in one-letter code: MNWITNYVRPKINSMLGRREMPENLWIKDPSTGEMVFHKDLESNQFVIPSSGHHMRIKAKDRLRFFFDNGEYTTLEAPKVPVDPLKFRDEKKYIDRLKDYRTRTGMDDAIVNGLGTIDGLPIVATVQDFGFMGGSLGMGAGEAIIQGFEKAIELKRPLVLFAASGGARMQEGILSLMQLPRTTVAVEMLKEAGLPYIVVLTNPTTGGVTASYAMLGDIHIAEPGALIGFAGPRVIEQTIREKLPEGFQSADYLMEHGMVDMVVSRLELKDTIARLLKIMTRQPGNSDAPEHEKTEATDKAA.

In terms of domain architecture, CoA carboxyltransferase N-terminal spans 25 to 294 (LWIKDPSTGE…NSDAPEHEKT (270 aa)). A disordered region spans residues 282–301 (QPGNSDAPEHEKTEATDKAA). Positions 288-301 (APEHEKTEATDKAA) are enriched in basic and acidic residues.

This sequence belongs to the AccD/PCCB family. In terms of assembly, acetyl-CoA carboxylase is a heterohexamer composed of biotin carboxyl carrier protein (AccB), biotin carboxylase (AccC) and two subunits each of ACCase subunit alpha (AccA) and ACCase subunit beta (AccD).

The protein localises to the cytoplasm. It catalyses the reaction N(6)-carboxybiotinyl-L-lysyl-[protein] + acetyl-CoA = N(6)-biotinyl-L-lysyl-[protein] + malonyl-CoA. The protein operates within lipid metabolism; malonyl-CoA biosynthesis; malonyl-CoA from acetyl-CoA: step 1/1. In terms of biological role, component of the acetyl coenzyme A carboxylase (ACC) complex. Biotin carboxylase (BC) catalyzes the carboxylation of biotin on its carrier protein (BCCP) and then the CO(2) group is transferred by the transcarboxylase to acetyl-CoA to form malonyl-CoA. In Brucella anthropi (strain ATCC 49188 / DSM 6882 / CCUG 24695 / JCM 21032 / LMG 3331 / NBRC 15819 / NCTC 12168 / Alc 37) (Ochrobactrum anthropi), this protein is Acetyl-coenzyme A carboxylase carboxyl transferase subunit beta.